Reading from the N-terminus, the 162-residue chain is Endoribonuclease YbeY (162 aa).

Zn(2+)-binding residues include H117, H121, and H127.

It belongs to the endoribonuclease YbeY family. Zn(2+) serves as cofactor.

The protein resides in the cytoplasm. Its function is as follows. Single strand-specific metallo-endoribonuclease involved in late-stage 70S ribosome quality control and in maturation of the 3' terminus of the 16S rRNA. This is Endoribonuclease YbeY from Francisella tularensis subsp. tularensis (strain WY96-3418).